The sequence spans 206 residues: Platelet glycoprotein Ib beta chain (206 aa).

The first 25 residues, 1–25 (MGSGPRGALSLLLLLLAPPSRPAAG), serve as a signal peptide directing secretion. 2 disulfides stabilise this stretch: Cys26/Cys32 and Cys30/Cys39. The 29-residue stretch at 27 to 55 (PAPCSCAGTLVDCGRRGLTWASLPTAFPV) folds into the LRRNT domain. Over 27-147 (PAPCSCAGTL…RAACAPGPLC (121 aa)) the chain is Extracellular. Residues 60–83 (LVLTGNNLTALPPGLLDALPALRT) form an LRR repeat. Asn66 carries an N-linked (GlcNAc...) asparagine glycan. In terms of domain architecture, LRRCT spans 89 to 143 (NPWRCDCRLVPLRAWLAGRPERAPYRDLRCVAPPALRGRLLPYLAEDELRAACAP). 2 disulfide bridges follow: Cys93-Cys118 and Cys95-Cys141. The chain crosses the membrane as a helical span at residues 148–172 (WGALAAQLALLGLGLLHALLLVLLL). Over 173-206 (CRLRRLRARARARAAARLSLTDPLVAERAGTDES) the chain is Cytoplasmic. At Ser191 the chain carries Phosphoserine; by PKA. At Thr193 the chain carries Phosphothreonine.

As to quaternary structure, two GP-Ib beta are disulfide-linked to one GP-Ib alpha. GP-IX is complexed with the GP-Ib heterodimer via a non covalent linkage. Interacts with TRAF4. As to expression, expressed in heart and brain.

The protein resides in the membrane. Functionally, gp-Ib, a surface membrane protein of platelets, participates in the formation of platelet plugs by binding to von Willebrand factor, which is already bound to the subendothelium. The chain is Platelet glycoprotein Ib beta chain (GP1BB) from Homo sapiens (Human).